A 279-amino-acid polypeptide reads, in one-letter code: Bifunctional protein FolD (279 aa).

Residues 162–164, Ser187, and Ile228 contribute to the NADP(+) site; that span reads GRS.

It belongs to the tetrahydrofolate dehydrogenase/cyclohydrolase family. As to quaternary structure, homodimer.

The enzyme catalyses (6R)-5,10-methylene-5,6,7,8-tetrahydrofolate + NADP(+) = (6R)-5,10-methenyltetrahydrofolate + NADPH. It carries out the reaction (6R)-5,10-methenyltetrahydrofolate + H2O = (6R)-10-formyltetrahydrofolate + H(+). It functions in the pathway one-carbon metabolism; tetrahydrofolate interconversion. Functionally, catalyzes the oxidation of 5,10-methylenetetrahydrofolate to 5,10-methenyltetrahydrofolate and then the hydrolysis of 5,10-methenyltetrahydrofolate to 10-formyltetrahydrofolate. The sequence is that of Bifunctional protein FolD from Acidiphilium cryptum (strain JF-5).